The sequence spans 182 residues: Orotate phosphoribosyltransferase (182 aa).

Residues Arg-96, Lys-97, Lys-100, His-102, and 122 to 130 (EDTSTTGGS) each bind 5-phospho-alpha-D-ribose 1-diphosphate. 2 residues coordinate orotate: Thr-126 and Arg-154.

It belongs to the purine/pyrimidine phosphoribosyltransferase family. PyrE subfamily. Homodimer. The cofactor is Mg(2+).

It catalyses the reaction orotidine 5'-phosphate + diphosphate = orotate + 5-phospho-alpha-D-ribose 1-diphosphate. It participates in pyrimidine metabolism; UMP biosynthesis via de novo pathway; UMP from orotate: step 1/2. Its function is as follows. Catalyzes the transfer of a ribosyl phosphate group from 5-phosphoribose 1-diphosphate to orotate, leading to the formation of orotidine monophosphate (OMP). This is Orotate phosphoribosyltransferase from Streptomyces avermitilis (strain ATCC 31267 / DSM 46492 / JCM 5070 / NBRC 14893 / NCIMB 12804 / NRRL 8165 / MA-4680).